Reading from the N-terminus, the 425-residue chain is Serine hydroxymethyltransferase (425 aa).

(6S)-5,6,7,8-tetrahydrofolate contacts are provided by residues Leu-126 and 130-132 (GHL). Lys-234 is modified (N6-(pyridoxal phosphate)lysine).

The protein belongs to the SHMT family. Homodimer. The cofactor is pyridoxal 5'-phosphate.

It is found in the cytoplasm. The enzyme catalyses (6R)-5,10-methylene-5,6,7,8-tetrahydrofolate + glycine + H2O = (6S)-5,6,7,8-tetrahydrofolate + L-serine. Its pathway is one-carbon metabolism; tetrahydrofolate interconversion. The protein operates within amino-acid biosynthesis; glycine biosynthesis; glycine from L-serine: step 1/1. Functionally, catalyzes the reversible interconversion of serine and glycine with tetrahydrofolate (THF) serving as the one-carbon carrier. This reaction serves as the major source of one-carbon groups required for the biosynthesis of purines, thymidylate, methionine, and other important biomolecules. Also exhibits THF-independent aldolase activity toward beta-hydroxyamino acids, producing glycine and aldehydes, via a retro-aldol mechanism. The polypeptide is Serine hydroxymethyltransferase (Desulfotalea psychrophila (strain LSv54 / DSM 12343)).